Here is a 339-residue protein sequence, read N- to C-terminus: Phenylalanine--tRNA ligase alpha subunit (339 aa).

Residue Glu254 participates in Mg(2+) binding.

The protein belongs to the class-II aminoacyl-tRNA synthetase family. Phe-tRNA synthetase alpha subunit type 1 subfamily. As to quaternary structure, tetramer of two alpha and two beta subunits. The cofactor is Mg(2+).

It is found in the cytoplasm. It carries out the reaction tRNA(Phe) + L-phenylalanine + ATP = L-phenylalanyl-tRNA(Phe) + AMP + diphosphate + H(+). The polypeptide is Phenylalanine--tRNA ligase alpha subunit (pheS) (Chlamydia pneumoniae (Chlamydophila pneumoniae)).